Here is a 392-residue protein sequence, read N- to C-terminus: S-adenosylmethionine synthase (392 aa).

His15 is an ATP binding site. Asp17 is a binding site for Mg(2+). Glu43 is a K(+) binding site. Glu56 and Gln99 together coordinate L-methionine. Positions 99–109 (QSKDIAQGVDE) are flexible loop. ATP is bound by residues 173 to 175 (DGK), 239 to 240 (KF), Asp248, 254 to 255 (RK), Ala271, and Lys275. Position 248 (Asp248) interacts with L-methionine. Lys279 contributes to the L-methionine binding site.

It belongs to the AdoMet synthase family. As to quaternary structure, homotetramer; dimer of dimers. Requires Mg(2+) as cofactor. K(+) is required as a cofactor.

It is found in the cytoplasm. The enzyme catalyses L-methionine + ATP + H2O = S-adenosyl-L-methionine + phosphate + diphosphate. Its pathway is amino-acid biosynthesis; S-adenosyl-L-methionine biosynthesis; S-adenosyl-L-methionine from L-methionine: step 1/1. In terms of biological role, catalyzes the formation of S-adenosylmethionine (AdoMet) from methionine and ATP. The overall synthetic reaction is composed of two sequential steps, AdoMet formation and the subsequent tripolyphosphate hydrolysis which occurs prior to release of AdoMet from the enzyme. In Finegoldia magna (strain ATCC 29328 / DSM 20472 / WAL 2508) (Peptostreptococcus magnus), this protein is S-adenosylmethionine synthase.